Here is a 501-residue protein sequence, read N- to C-terminus: Lysine--tRNA ligase (501 aa).

Mg(2+)-binding residues include E410 and E417.

Belongs to the class-II aminoacyl-tRNA synthetase family. As to quaternary structure, homodimer. The cofactor is Mg(2+).

Its subcellular location is the cytoplasm. The catalysed reaction is tRNA(Lys) + L-lysine + ATP = L-lysyl-tRNA(Lys) + AMP + diphosphate. The chain is Lysine--tRNA ligase from Shewanella pealeana (strain ATCC 700345 / ANG-SQ1).